A 335-amino-acid chain; its full sequence is UPF0353 protein Mvan_2751 (335 aa).

2 helical membrane-spanning segments follow: residues 18-38 (WFFL…IVQM) and 67-87 (LPAV…AGPT). The region spanning 98–294 (VVMLVIDVSQ…EQLKQVFTNL (197 aa)) is the VWFA domain. The helical transmembrane segment at 309 to 329 (VGWLRIGSLVLALAALGALLI) threads the bilayer.

This sequence belongs to the UPF0353 family.

The protein localises to the cell membrane. The sequence is that of UPF0353 protein Mvan_2751 from Mycolicibacterium vanbaalenii (strain DSM 7251 / JCM 13017 / BCRC 16820 / KCTC 9966 / NRRL B-24157 / PYR-1) (Mycobacterium vanbaalenii).